The sequence spans 388 residues: MRYLTAGESHGPGLTTIIEGLPAGMPLLAEDVNKELKRRQGGHGRGARMRIEKDQVQITAGIRHGKTLGAPVAMFVENKDWKHWETVMSIEPVPEKNEKSRRVSRPRPGHADLVGGMKYGHNDMRNVLERSSARETTVRVAAGAVAKKLLHELGIEVAGHVLEIGGTRANLTRDYAVAEIQETSEASPVRCLDGVAAEEMMQKIDDAKKNGDTIGGIVEVVVGGVPAGLGSYVQWDKKLDAKIARAIVSINAFKGAEFGVGFEAARKPGSEVMDEILWSKEDGYTRRTNNLGGFEGGMTNGMPIVVRGVMKPIPTLYKPLQSVDIDSKETFNASVERSDSCAVPAASVVAEAVVAWEVAVAVLEKFDGDRFDTLKKHVEEHRNLTKEF.

NADP(+) contacts are provided by Arg39 and Arg45. The tract at residues 95 to 118 (EKNEKSRRVSRPRPGHADLVGGMK) is disordered. FMN is bound by residues 130 to 132 (RSS), 251 to 252 (NA), Gly296, 311 to 315 (KPIPT), and Arg337.

It belongs to the chorismate synthase family. As to quaternary structure, homotetramer. Requires FMNH2 as cofactor.

It catalyses the reaction 5-O-(1-carboxyvinyl)-3-phosphoshikimate = chorismate + phosphate. It functions in the pathway metabolic intermediate biosynthesis; chorismate biosynthesis; chorismate from D-erythrose 4-phosphate and phosphoenolpyruvate: step 7/7. In terms of biological role, catalyzes the anti-1,4-elimination of the C-3 phosphate and the C-6 proR hydrogen from 5-enolpyruvylshikimate-3-phosphate (EPSP) to yield chorismate, which is the branch point compound that serves as the starting substrate for the three terminal pathways of aromatic amino acid biosynthesis. This reaction introduces a second double bond into the aromatic ring system. This chain is Chorismate synthase, found in Listeria monocytogenes serovar 1/2a (strain ATCC BAA-679 / EGD-e).